A 473-amino-acid chain; its full sequence is Ribulose bisphosphate carboxylase large chain (473 aa).

Positions M1–S2 are excised as a propeptide. P3 carries the post-translational modification N-acetylproline. At K14 the chain carries N6,N6,N6-trimethyllysine. Residues N123 and T173 each coordinate substrate. The Proton acceptor role is filled by K175. K177 contacts substrate. Residues K201, D203, and E204 each contribute to the Mg(2+) site. N6-carboxylysine is present on K201. Residue H294 is the Proton acceptor of the active site. Substrate-binding residues include R295, H327, and S379.

This sequence belongs to the RuBisCO large chain family. Type I subfamily. Heterohexadecamer of 8 large chains and 8 small chains; disulfide-linked. The disulfide link is formed within the large subunit homodimers. Requires Mg(2+) as cofactor. Post-translationally, the disulfide bond which can form in the large chain dimeric partners within the hexadecamer appears to be associated with oxidative stress and protein turnover.

It localises to the plastid. Its subcellular location is the chloroplast. It carries out the reaction 2 (2R)-3-phosphoglycerate + 2 H(+) = D-ribulose 1,5-bisphosphate + CO2 + H2O. The enzyme catalyses D-ribulose 1,5-bisphosphate + O2 = 2-phosphoglycolate + (2R)-3-phosphoglycerate + 2 H(+). Functionally, ruBisCO catalyzes two reactions: the carboxylation of D-ribulose 1,5-bisphosphate, the primary event in carbon dioxide fixation, as well as the oxidative fragmentation of the pentose substrate in the photorespiration process. Both reactions occur simultaneously and in competition at the same active site. The protein is Ribulose bisphosphate carboxylase large chain of Vigna unguiculata (Cowpea).